A 111-amino-acid polypeptide reads, in one-letter code: Nucleoid-associated protein Cpha266_1171 (111 aa).

This sequence belongs to the YbaB/EbfC family. In terms of assembly, homodimer.

The protein localises to the cytoplasm. The protein resides in the nucleoid. In terms of biological role, binds to DNA and alters its conformation. May be involved in regulation of gene expression, nucleoid organization and DNA protection. This Chlorobium phaeobacteroides (strain DSM 266 / SMG 266 / 2430) protein is Nucleoid-associated protein Cpha266_1171.